A 72-amino-acid chain; its full sequence is Putative membrane protein insertion efficiency factor (72 aa).

It belongs to the UPF0161 family.

The protein resides in the cell inner membrane. In terms of biological role, could be involved in insertion of integral membrane proteins into the membrane. The chain is Putative membrane protein insertion efficiency factor from Amoebophilus asiaticus (strain 5a2).